Here is a 1282-residue protein sequence, read N- to C-terminus: Indigoidine synthase (1282 aa).

The tract at residues 24–379 (AQRVAEHPEA…GGIQLARGYL (356 aa)) is adenylation. Positions 937–1012 (APRTETEKEI…KLARRLEREV (76 aa)) constitute a Carrier domain. Ser972 bears the O-(pantetheine 4'-phosphoryl)serine mark. Residues 1030 to 1138 (RPVICWPGLG…APGSPKVRAE (109 aa)) form a thioesterase region.

The protein belongs to the ATP-dependent AMP-binding enzyme family. Pantetheine 4'-phosphate is required as a cofactor.

The enzyme catalyses 2 FMN + 2 L-glutamine + 2 ATP + O2 = indigoidine + 2 FMNH2 + 2 AMP + 2 diphosphate + 2 H2O. It catalyses the reaction FMN + L-glutamine + ATP = 3-amino-1,5-dihydropyridine-2,6-dione + FMNH2 + AMP + diphosphate. The catalysed reaction is 2 3-amino-1,5-dihydropyridine-2,6-dione + O2 = indigoidine + 2 H2O. The protein operates within pigment biosynthesis. Its function is as follows. Nonribosomal peptide synthetase involved in the biosynthesis of the blue pigment indigoidine. Catalyzes the synthesis of the blue pigment using L-Gln as a substrate. Two glutamine molecules are cyclized and oxidized to form indigoidine. This Streptomyces lavendulae protein is Indigoidine synthase.